The chain runs to 179 residues: Ribulose bisphosphate carboxylase small subunit, chloroplastic 1/4 (179 aa).

Residues methionine 1–glutamine 58 constitute a chloroplast transit peptide.

Belongs to the RuBisCO small chain family. As to quaternary structure, heterohexadecamer of 8 large and 8 small subunits.

It localises to the plastid. The protein resides in the chloroplast. In terms of biological role, ruBisCO catalyzes two reactions: the carboxylation of D-ribulose 1,5-bisphosphate, the primary event in carbon dioxide fixation, as well as the oxidative fragmentation of the pentose substrate. Both reactions occur simultaneously and in competition at the same active site. Although the small subunit is not catalytic it is essential for maximal activity. In Fritillaria agrestis (Stinkbells), this protein is Ribulose bisphosphate carboxylase small subunit, chloroplastic 1/4 (RBCS1).